Here is a 579-residue protein sequence, read N- to C-terminus: Probable zinc metalloprotease EGY1, chloroplastic (579 aa).

Disordered stretches follow at residues M1–A42 and G78–P146. Residues M1–C44 constitute a chloroplast transit peptide. Residues L16–A42 are compositionally biased toward low complexity. The span at G78 to G92 shows a compositional bias: gly residues. Composition is skewed to low complexity over residues A104–V115 and S125–G137. A run of 8 helical transmembrane segments spans residues Y272–A292, L321–F341, L357–F377, M392–L412, A419–V439, A452–F472, L505–I525, and A547–L567.

This sequence belongs to the peptidase M50B family.

It localises to the plastid. The protein localises to the chloroplast membrane. Its function is as follows. Probable membrane-associated metalloprotease that may be involved in chloroplast development. The polypeptide is Probable zinc metalloprotease EGY1, chloroplastic (EGY1) (Oryza sativa subsp. japonica (Rice)).